Here is a 660-residue protein sequence, read N- to C-terminus: Zeaxanthin epoxidase, chloroplastic (660 aa).

The N-terminal 49 residues, Met-1 to Lys-49, are a transit peptide targeting the chloroplast. FAD is bound by residues Lys-79 to Glu-107 and Thr-357 to Asp-370. The FHA domain occupies Leu-545–Gly-609.

FAD is required as a cofactor.

The protein resides in the plastid. The protein localises to the chloroplast membrane. It is found in the chloroplast thylakoid membrane. It carries out the reaction all-trans-zeaxanthin + 4 reduced [2Fe-2S]-[ferredoxin] + 2 O2 + 4 H(+) = all-trans-violaxanthin + 4 oxidized [2Fe-2S]-[ferredoxin] + 2 H2O. The catalysed reaction is all-trans-zeaxanthin + 2 reduced [2Fe-2S]-[ferredoxin] + O2 + 2 H(+) = all-trans-antheraxanthin + 2 oxidized [2Fe-2S]-[ferredoxin] + H2O. The enzyme catalyses all-trans-antheraxanthin + 2 reduced [2Fe-2S]-[ferredoxin] + O2 + 2 H(+) = all-trans-violaxanthin + 2 oxidized [2Fe-2S]-[ferredoxin] + H2O. It catalyses the reaction beta-cryptoxanthin + 2 reduced [2Fe-2S]-[ferredoxin] + O2 + 2 H(+) = (5R,6S)-5,6-epoxi-beta-cryptoxanthin + 2 oxidized [2Fe-2S]-[ferredoxin] + H2O. It functions in the pathway plant hormone biosynthesis; abscisate biosynthesis. Converts zeaxanthin into antheraxanthin and subsequently violaxanthin. Also acts on beta-cryptoxanthin. Involved in the epoxidation of zeaxanthin. The chain is Zeaxanthin epoxidase, chloroplastic from Capsicum annuum (Capsicum pepper).